We begin with the raw amino-acid sequence, 396 residues long: UPF0046 protein T07D4.2 (396 aa).

The segment at 73–94 is disordered; sequence SRRGSIASGIPMDKKTRRKLSN.

This sequence belongs to the UPF0046 family.

This chain is UPF0046 protein T07D4.2, found in Caenorhabditis elegans.